A 478-amino-acid chain; its full sequence is MNWTLASPEIVLALCGLVILLVGVARNRREDTFLCAMLTLGAFLVTGLLTVSGALGLGFQGQFVADPFAVMVKLLILSGASIAVVLSLDYNRHHGMERFEFPVLTLFSTVGMMVMVSASNFMTLYMGLELMSLAIYVLAAFARDELRSAEAGLKYFVLGSLASGLLLYGISLIYGFAGTMDFSALREALAHPAGTSPGLTVGVVFVIAGLAFKISAAPFHMWTPDVYEGSPTPVTAFMGTAPKVAAIAMMLRTLVTPFHGVLVQWQHVVALISVVSMVWGALAAIGQTSIKRLMAYSSIGHMGYALVGLAAGSQAGIRGLLIYLVTYVFMNTGTFACILAMRRRGRQLEKVSDLAGAGRTDPALALLLAIFMFSMAGIPPMSGFFGKLYVFLAAVQAGEPLLWGLAVIGVLTSVIGAYYYLRVVKVMYFDDASEGPFEAWPTSVSVVAVGSAIFTALFFLFPAPILAAADLAAKALLR.

A run of 14 helical transmembrane segments spans residues 5 to 25 (LASPEIVLALCGLVILLVGVA), 37 to 57 (MLTLGAFLVTGLLTVSGALGL), 68 to 88 (FAVMVKLLILSGASIAVVLSL), 99 to 119 (FEFPVLTLFSTVGMMVMVSAS), 121 to 141 (FMTLYMGLELMSLAIYVLAAF), 156 to 176 (FVLGSLASGLLLYGISLIYGF), 199 to 219 (LTVGVVFVIAGLAFKISAAPF), 231 to 251 (PTPVTAFMGTAPKVAAIAMML), 268 to 288 (VVALISVVSMVWGALAAIGQT), 293 to 313 (LMAYSSIGHMGYALVGLAAGS), 320 to 340 (LLIYLVTYVFMNTGTFACILA), 365 to 385 (ALLLAIFMFSMAGIPPMSGFF), 401 to 421 (LLWGLAVIGVLTSVIGAYYYL), and 446 to 466 (VVAVGSAIFTALFFLFPAPIL).

This sequence belongs to the complex I subunit 2 family. NDH-1 is composed of 14 different subunits. Subunits NuoA, H, J, K, L, M, N constitute the membrane sector of the complex.

The protein localises to the cell inner membrane. It carries out the reaction a quinone + NADH + 5 H(+)(in) = a quinol + NAD(+) + 4 H(+)(out). NDH-1 shuttles electrons from NADH, via FMN and iron-sulfur (Fe-S) centers, to quinones in the respiratory chain. The immediate electron acceptor for the enzyme in this species is believed to be ubiquinone. Couples the redox reaction to proton translocation (for every two electrons transferred, four hydrogen ions are translocated across the cytoplasmic membrane), and thus conserves the redox energy in a proton gradient. The protein is NADH-quinone oxidoreductase subunit N of Granulibacter bethesdensis (strain ATCC BAA-1260 / CGDNIH1).